Here is a 578-residue protein sequence, read N- to C-terminus: MSDSSVLSLLRERAGLQPDDAAFTYIDYEQDWAGITETLTWSEVFRRTRIVAHEVRRHCTTGDRAVILAPQGLAYIAAFLGSMQAGAIAVPLSVPQIGSHDERVSAVLADASPSVILTTSAVAEAVAEHIHRPNTNNVGPIIEIDSLDLTGNSPSFRVKDLPSAAYLQYTSGSTRAPAGVMISHRNLQANFQQLMSNYFGDRNGVAPPDTTIVSWLPFYHDMGLVLGIIAPILGGYRSELTSPLAFLQRPARWLHSLANGSPSWSAAPNFAFELAVRKTTDADIEGLDLGNVLGITSGAERVHPNTLSRFCNRFAPYNFREDMIRPSYGLAEATLYVASRNSGDKPEVVYFEPDKLSTGSANRCEPKTGTPLLSYGMPTSPTVRIVDPDTCIECPAGTIGEIWVKGDNVAEGYWNKPDETRHTFGAMLVHPSAGTPDGSWLRTGDLGFLSEDEMFIVGRMKDMLIVYGRNHYPEDIESTVQEITGGRVAAISVPVDHTEKLVTVIELKLLGDSAGEAMDELDVIKNNVTAAISRSHGLNVADLVLVPPGSIPTTTSGKIRRAACVEQYRLQQFTRLDG.

The protein belongs to the ATP-dependent AMP-binding enzyme family.

This Mycobacterium bovis (strain ATCC BAA-935 / AF2122/97) protein is Putative fatty-acid--CoA ligase fadD21 (fadD21).